A 248-amino-acid polypeptide reads, in one-letter code: Anamorsin homolog (248 aa).

Residues 4-129 (FKGLQKSLYI…ETGSSARLSF (126 aa)) are N-terminal SAM-like domain. A linker region spans residues 130–161 (AKKNASAINVWKISGDDEELIDEEELLDEEDK). The [2Fe-2S] cluster site is built by cysteine 172, cysteine 181, cysteine 184, and cysteine 186. The tract at residues 172-186 (CSTTGKRKACKNCSC) is fe-S binding site A. [4Fe-4S] cluster is bound by residues cysteine 209, cysteine 212, cysteine 220, and cysteine 223. 2 consecutive short sequence motifs (cx2C motif) follow at residues 209 to 212 (CGNC) and 220 to 223 (CSTC). The interval 209 to 223 (CGNCYLGDAFRCSTC) is fe-S binding site B.

The protein belongs to the anamorsin family. As to quaternary structure, monomer. The cofactor is [2Fe-2S] cluster. [4Fe-4S] cluster serves as cofactor.

It is found in the cytoplasm. The protein localises to the mitochondrion intermembrane space. Functionally, component of the cytosolic iron-sulfur (Fe-S) protein assembly (CIA) machinery. Required for the maturation of extramitochondrial Fe-S proteins. Part of an electron transfer chain functioning in an early step of cytosolic Fe-S biogenesis, facilitating the de novo assembly of a [4Fe-4S] cluster on the cytosolic Fe-S scaffold complex. Electrons are transferred from NADPH via a FAD- and FMN-containing diflavin oxidoreductase. Together with the diflavin oxidoreductase, also required for the assembly of the diferric tyrosyl radical cofactor of ribonucleotide reductase (RNR), probably by providing electrons for reduction during radical cofactor maturation in the catalytic small subunit. The chain is Anamorsin homolog from Drosophila erecta (Fruit fly).